Reading from the N-terminus, the 145-residue chain is 3-hydroxyacyl-[acyl-carrier-protein] dehydratase FabZ (145 aa).

The active site involves histidine 51.

The protein belongs to the thioester dehydratase family. FabZ subfamily.

The protein localises to the cytoplasm. It carries out the reaction a (3R)-hydroxyacyl-[ACP] = a (2E)-enoyl-[ACP] + H2O. In terms of biological role, involved in unsaturated fatty acids biosynthesis. Catalyzes the dehydration of short chain beta-hydroxyacyl-ACPs and long chain saturated and unsaturated beta-hydroxyacyl-ACPs. In Staphylococcus haemolyticus (strain JCSC1435), this protein is 3-hydroxyacyl-[acyl-carrier-protein] dehydratase FabZ.